A 284-amino-acid chain; its full sequence is Pantothenate synthetase (284 aa).

30-37 (MGNLHDGH) contacts ATP. H37 functions as the Proton donor in the catalytic mechanism. Q61 lines the (R)-pantoate pocket. A beta-alanine-binding site is contributed by Q61. 149–152 (GEKD) serves as a coordination point for ATP. Q155 serves as a coordination point for (R)-pantoate. Residues V178 and 186–189 (LSSR) contribute to the ATP site.

This sequence belongs to the pantothenate synthetase family. Homodimer.

It localises to the cytoplasm. The catalysed reaction is (R)-pantoate + beta-alanine + ATP = (R)-pantothenate + AMP + diphosphate + H(+). Its pathway is cofactor biosynthesis; (R)-pantothenate biosynthesis; (R)-pantothenate from (R)-pantoate and beta-alanine: step 1/1. Its function is as follows. Catalyzes the condensation of pantoate with beta-alanine in an ATP-dependent reaction via a pantoyl-adenylate intermediate. The polypeptide is Pantothenate synthetase (Klebsiella pneumoniae (strain 342)).